The primary structure comprises 699 residues: MARITPIERYRNIGICAHVDAGKTTTTERVLFYTGLSHKIGEVHDGAATMDWMEQEQERGITITSAATTCFWKGMEGQFEDHRINIIDTPGHVDFTIEVERSLRVLDGAVLVLCGSSGVQPQTETVWRQMEKYAVPRIVFVNKMDRTGADFLYVVEQLKTRLGANAVPIHLAIGAEDDFEGVVDLIKMKAINWNASDQGMTFSYEEIPADMQDMAEEWRENLISEAAEANEELMDKYLEEGDLTEEEIKVGLRARTLANEIILCSCGSAFKNKGVQAVLDAVIEYLPSPTEVAAITGINDDKDESEGIRSADDEAPFSALAFKIATDPFVGTLTFFRVYSGVVQTGDSVYNPVKGKKERFGRIVQMHANDRQEIKEVRAGDIAAAIGLKDVTTGDTLCDAKHIITLERMEFPEPVISVAVEPRTLAAQEKMGIALGKLAAEDPSFRVATDDETGQTIISGMGELHLDILVERMKREFGVECNVGNPQVSYRETIRGTVEVEGKFIRQSGGKGQFGHVWLKMEPNEEGAGFEFVNEIVGGTVPKEFIPAVEKGCKEQMDSGVLAGYPLLDIKVTLYDGSFHDVDSNEIAFKVAASMGFRKGALEANPVILEPMMKVEVTTPEANMGDVVGDLNRRRGMIDGMDEGPAGSKIVNALVPLAEMFGYATDLRSATQGRASYSMEFQQYNEAPKLVAQKIMETR.

In terms of domain architecture, tr-type G spans 8-290; sequence ERYRNIGICA…AVIEYLPSPT (283 aa). Residues 17-24, 88-92, and 142-145 each bind GTP; these read AHVDAGKT, DTPGH, and NKMD.

It belongs to the TRAFAC class translation factor GTPase superfamily. Classic translation factor GTPase family. EF-G/EF-2 subfamily.

It localises to the cytoplasm. Catalyzes the GTP-dependent ribosomal translocation step during translation elongation. During this step, the ribosome changes from the pre-translocational (PRE) to the post-translocational (POST) state as the newly formed A-site-bound peptidyl-tRNA and P-site-bound deacylated tRNA move to the P and E sites, respectively. Catalyzes the coordinated movement of the two tRNA molecules, the mRNA and conformational changes in the ribosome. The polypeptide is Elongation factor G 2 (Colwellia psychrerythraea (strain 34H / ATCC BAA-681) (Vibrio psychroerythus)).